We begin with the raw amino-acid sequence, 482 residues long: Capsule synthesis positive regulator AcpB (482 aa).

PRD domains are found at residues 165–270 and 283–395; these read PFEK…YKDI and EGNL…YTSN.

This sequence belongs to the AtxA/AcpA family.

Its function is as follows. AcpB and AcpA regulate cap gene expression and capsule synthesis. In Bacillus anthracis, this protein is Capsule synthesis positive regulator AcpB (acpB).